Consider the following 196-residue polypeptide: Rho-related protein racL (196 aa).

10–17 (GDGAVGKT) provides a ligand contact to GTP. Positions 32–40 (YQPTVFDNF) match the Effector region motif. GTP is bound by residues 57–61 (DTAGQ) and 116–119 (TQND). The residue at position 193 (cysteine 193) is a Cysteine methyl ester. The S-geranylgeranyl cysteine moiety is linked to residue cysteine 193. Positions 194–196 (IIL) are cleaved as a propeptide — removed in mature form.

The protein belongs to the small GTPase superfamily. Rho family.

Its subcellular location is the cell membrane. The sequence is that of Rho-related protein racL (racL) from Dictyostelium discoideum (Social amoeba).